Here is a 100-residue protein sequence, read N- to C-terminus: Large ribosomal subunit protein mL53 (100 aa).

It belongs to the mitochondrion-specific ribosomal protein mL53 family. In terms of assembly, component of the mitochondrial large ribosomal subunit (mt-LSU). Mature yeast 74S mitochondrial ribosomes consist of a small (37S) and a large (54S) subunit. The 37S small subunit contains a 15S ribosomal RNA (15S mt-rRNA) and at least 32 different proteins. The 54S large subunit contains a 21S rRNA (21S mt-rRNA) and at least 45 different proteins.

Its subcellular location is the mitochondrion. Functionally, component of the mitochondrial ribosome (mitoribosome), a dedicated translation machinery responsible for the synthesis of mitochondrial genome-encoded proteins, including at least some of the essential transmembrane subunits of the mitochondrial respiratory chain. The mitoribosomes are attached to the mitochondrial inner membrane and translation products are cotranslationally integrated into the membrane. This is Large ribosomal subunit protein mL53 (mrpl44) from Schizosaccharomyces pombe (strain 972 / ATCC 24843) (Fission yeast).